Reading from the N-terminus, the 178-residue chain is Nucleoside-triphosphatase THEP1 (178 aa).

ATP is bound by residues 7–14 and 102–109; these read GEPGVGKT and VIIIDEIG.

It belongs to the THEP1 NTPase family. As to quaternary structure, monomer.

The catalysed reaction is a ribonucleoside 5'-triphosphate + H2O = a ribonucleoside 5'-diphosphate + phosphate + H(+). In terms of biological role, has nucleotide phosphatase activity towards ATP, GTP, CTP, TTP and UTP. May hydrolyze nucleoside diphosphates with lower efficiency. Does not have kinase activity. The chain is Nucleoside-triphosphatase THEP1 from Aquifex aeolicus (strain VF5).